Here is a 97-residue protein sequence, read N- to C-terminus: Large ribosomal subunit protein eL21 (97 aa).

The segment at 1-26 (MQKSEGFRSKTRYKLQKHPRQKGMAP) is disordered. The span at 9-21 (SKTRYKLQKHPRQ) shows a compositional bias: basic residues.

It belongs to the eukaryotic ribosomal protein eL21 family.

The polypeptide is Large ribosomal subunit protein eL21 (Methanococcus maripaludis (strain C5 / ATCC BAA-1333)).